The following is an 847-amino-acid chain: Leucine--tRNA ligase (847 aa).

The short motif at 41–51 (PYPSGRIHMGH) is the 'HIGH' region element. The 'KMSKS' region motif lies at 619–623 (KMSKS). Residue lysine 622 coordinates ATP.

The protein belongs to the class-I aminoacyl-tRNA synthetase family.

Its subcellular location is the cytoplasm. It catalyses the reaction tRNA(Leu) + L-leucine + ATP = L-leucyl-tRNA(Leu) + AMP + diphosphate. This is Leucine--tRNA ligase from Cereibacter sphaeroides (strain KD131 / KCTC 12085) (Rhodobacter sphaeroides).